The primary structure comprises 249 residues: Aspartate/glutamate leucyltransferase (249 aa).

The protein belongs to the R-transferase family. Bpt subfamily.

It localises to the cytoplasm. The enzyme catalyses N-terminal L-glutamyl-[protein] + L-leucyl-tRNA(Leu) = N-terminal L-leucyl-L-glutamyl-[protein] + tRNA(Leu) + H(+). The catalysed reaction is N-terminal L-aspartyl-[protein] + L-leucyl-tRNA(Leu) = N-terminal L-leucyl-L-aspartyl-[protein] + tRNA(Leu) + H(+). Functions in the N-end rule pathway of protein degradation where it conjugates Leu from its aminoacyl-tRNA to the N-termini of proteins containing an N-terminal aspartate or glutamate. The polypeptide is Aspartate/glutamate leucyltransferase (Brucella abortus (strain S19)).